A 975-amino-acid polypeptide reads, in one-letter code: Ionotropic receptor 21a (975 aa).

The N-terminal stretch at 1-21 (MFKRIVLAVINLVFLIVSTTA) is a signal peptide. 3 N-linked (GlcNAc...) asparagine glycosylation sites follow: Asn67, Asn177, and Asn355. The helical transmembrane segment at 433-453 (WPVWVAVILIYLLAIFPLAFS) threads the bilayer. Asn464 carries N-linked (GlcNAc...) asparagine glycosylation. Residues 505–525 (IYWVFTIIITACYTGSIIAFI) traverse the membrane as a helical segment. Asn561, Asn586, and Asn611 each carry an N-linked (GlcNAc...) asparagine glycan. A helical transmembrane segment spans residues 708-728 (MFLLMLFGYVVALGVLISEWV). Disordered stretches follow at residues 757 to 839 (ATAG…HSLS) and 911 to 938 (SPHS…RKEM). 2 stretches are compositionally biased toward polar residues: residues 760–777 (GSDN…TNRN) and 788–800 (VENS…NGSA). N-linked (GlcNAc...) asparagine glycosylation is found at Asn763 and Asn797.

Belongs to the glutamate-gated ion channel (TC 1.A.10.1) family. In both female and male antenna, expressed specifically in 3 sensory neurons of flagellomere 13 segment (at protein level).

It is found in the cell projection. The protein localises to the cilium membrane. In terms of biological role, integral part of a neural sensory system in the antenna that provides the neural basis for the response to environmental changes in temperature (thermosensation). Specifically, required for thermosensing by the cooling cell. Plays a role in heat seeking and heat-stimulated blood feeding behavior. The chain is Ionotropic receptor 21a from Anopheles gambiae (African malaria mosquito).